The following is a 199-amino-acid chain: Recombination protein RecR (199 aa).

Residues 56 to 71 (CAICGNVSEKETCGIC) form a C4-type zinc finger. A Toprim domain is found at 79–174 (ATICVVEEAK…RVTRLASGLP (96 aa)).

The protein belongs to the RecR family.

In terms of biological role, may play a role in DNA repair. It seems to be involved in an RecBC-independent recombinational process of DNA repair. It may act with RecF and RecO. The polypeptide is Recombination protein RecR (Clavibacter michiganensis subsp. michiganensis (strain NCPPB 382)).